The primary structure comprises 314 residues: Ferredoxin:CoB-CoM heterodisulfide reductase subunit B (314 aa).

Belongs to the HdrB family. As to quaternary structure, the ferredoxin:CoB-CoM heterodisulfide reductase is composed of three subunits; HdrA1, HdrB1 and HdrC1. The cofactor is [4Fe-4S] cluster.

The protein resides in the cytoplasm. It catalyses the reaction coenzyme B + coenzyme M + 2 oxidized [2Fe-2S]-[ferredoxin] = coenzyme M-coenzyme B heterodisulfide + 2 reduced [2Fe-2S]-[ferredoxin] + 2 H(+). The protein operates within cofactor metabolism; coenzyme M-coenzyme B heterodisulfide reduction; coenzyme B and coenzyme M from coenzyme M-coenzyme B heterodisulfide: step 1/1. Functionally, part of a complex that catalyzes the reversible reduction of CoM-S-S-CoB to the thiol-coenzymes H-S-CoM (coenzyme M) and H-S-CoB (coenzyme B). Probably involved in methylotrophic methanogenesis but not in aceticlastic methanogenesis. In Methanosarcina acetivorans (strain ATCC 35395 / DSM 2834 / JCM 12185 / C2A), this protein is Ferredoxin:CoB-CoM heterodisulfide reductase subunit B.